The sequence spans 101 residues: Large ribosomal subunit protein uL24 (101 aa).

Belongs to the universal ribosomal protein uL24 family. In terms of assembly, part of the 50S ribosomal subunit.

In terms of biological role, one of two assembly initiator proteins, it binds directly to the 5'-end of the 23S rRNA, where it nucleates assembly of the 50S subunit. Functionally, one of the proteins that surrounds the polypeptide exit tunnel on the outside of the subunit. This chain is Large ribosomal subunit protein uL24, found in Borrelia garinii subsp. bavariensis (strain ATCC BAA-2496 / DSM 23469 / PBi) (Borreliella bavariensis).